A 574-amino-acid chain; its full sequence is Alpha-mannosidase I MNS5 (574 aa).

Over 1–9 the chain is Cytoplasmic; it reads MSCPIHPRR. The chain crosses the membrane as a helical; Signal-anchor for type II membrane protein span at residues 10–26; the sequence is LFLCLLISLTFFVVDPS. Residues 27–574 lie on the Lumenal side of the membrane; that stretch reads SQHIEVKKKQ…VGYCGLWNPL (548 aa). N-linked (GlcNAc...) asparagine glycosylation is found at N89, N107, and N121. E134 functions as the Proton donor in the catalytic mechanism. A glycan (N-linked (GlcNAc...) asparagine) is linked at N201. The active site involves D274. A glycan (N-linked (GlcNAc...) asparagine) is linked at N349. Residue E367 is the Proton donor of the active site. Residue E388 is part of the active site. T471 lines the Ca(2+) pocket. The N-linked (GlcNAc...) asparagine glycan is linked to N494.

The protein belongs to the glycosyl hydrolase 47 family. The cofactor is Ca(2+).

It is found in the endoplasmic reticulum membrane. Its pathway is protein modification; protein glycosylation. Its function is as follows. Can convert Man(9)GlcNAc(2) and Man(8)GlcNAc(2) into N-glycans with a terminal alpha-1,6-linked Man residue in the C-branch. Functions in the formation of unique N-glycan structures that are specifically recognized by components of the endoplasmic reticulum-associated degradation (ERAD) machinery, which leads to the degradation of misfolded glycoproteins. Most likely generates N-glycan signal on misfolded glycoproteins that is subsequently recognized by OS9. Required for ERAD of the heavily glycosylated and misfolded BRI1 variants BRI1-5 and BRI1-9. Does not seem to play role in N-glycan processing of correctly folded proteins destined for secretion. The polypeptide is Alpha-mannosidase I MNS5 (MNS5) (Arabidopsis thaliana (Mouse-ear cress)).